The chain runs to 65 residues: DNA-directed RNA polymerase subunit omega (65 aa).

The protein belongs to the RNA polymerase subunit omega family. As to quaternary structure, the RNAP catalytic core consists of 2 alpha, 1 beta, 1 beta' and 1 omega subunit. When a sigma factor is associated with the core the holoenzyme is formed, which can initiate transcription.

It carries out the reaction RNA(n) + a ribonucleoside 5'-triphosphate = RNA(n+1) + diphosphate. Promotes RNA polymerase assembly. Latches the N- and C-terminal regions of the beta' subunit thereby facilitating its interaction with the beta and alpha subunits. In Finegoldia magna (strain ATCC 29328 / DSM 20472 / WAL 2508) (Peptostreptococcus magnus), this protein is DNA-directed RNA polymerase subunit omega.